A 157-amino-acid polypeptide reads, in one-letter code: Small ribosomal subunit protein uS7 (157 aa).

The protein belongs to the universal ribosomal protein uS7 family. As to quaternary structure, part of the 30S ribosomal subunit. Contacts proteins S9 and S11.

Its function is as follows. One of the primary rRNA binding proteins, it binds directly to 16S rRNA where it nucleates assembly of the head domain of the 30S subunit. Is located at the subunit interface close to the decoding center, probably blocks exit of the E-site tRNA. The chain is Small ribosomal subunit protein uS7 from Caldicellulosiruptor saccharolyticus (strain ATCC 43494 / DSM 8903 / Tp8T 6331).